A 66-amino-acid chain; its full sequence is Large ribosomal subunit protein bL31 (66 aa).

4 residues coordinate Zn(2+): C16, C18, C36, and C39.

The protein belongs to the bacterial ribosomal protein bL31 family. Type A subfamily. In terms of assembly, part of the 50S ribosomal subunit. Zn(2+) is required as a cofactor.

Binds the 23S rRNA. The protein is Large ribosomal subunit protein bL31 of Trichlorobacter lovleyi (strain ATCC BAA-1151 / DSM 17278 / SZ) (Geobacter lovleyi).